A 410-amino-acid chain; its full sequence is Lipoyl synthase, mitochondrial (410 aa).

Residues 1–29 constitute a mitochondrion transit peptide; it reads MASTTVCSAARIRVASSQVLRSIANTRTY. A compositionally biased stretch (polar residues) spans 29 to 39; sequence YATTSPESSIP. The tract at residues 29 to 49 is disordered; the sequence is YATTSPESSIPETKPTAKRTP. Residues C129, C134, C140, C160, C164, C167, and S375 each contribute to the [4Fe-4S] cluster site. In terms of domain architecture, Radical SAM core spans 143–364; the sequence is GGSKAAATAT…KEKAMEMGFL (222 aa).

Belongs to the radical SAM superfamily. Lipoyl synthase family. It depends on [4Fe-4S] cluster as a cofactor.

It is found in the mitochondrion. It carries out the reaction [[Fe-S] cluster scaffold protein carrying a second [4Fe-4S](2+) cluster] + N(6)-octanoyl-L-lysyl-[protein] + 2 oxidized [2Fe-2S]-[ferredoxin] + 2 S-adenosyl-L-methionine + 4 H(+) = [[Fe-S] cluster scaffold protein] + N(6)-[(R)-dihydrolipoyl]-L-lysyl-[protein] + 4 Fe(3+) + 2 hydrogen sulfide + 2 5'-deoxyadenosine + 2 L-methionine + 2 reduced [2Fe-2S]-[ferredoxin]. The protein operates within protein modification; protein lipoylation via endogenous pathway; protein N(6)-(lipoyl)lysine from octanoyl-[acyl-carrier-protein]: step 2/2. Its function is as follows. Catalyzes the radical-mediated insertion of two sulfur atoms into the C-6 and C-8 positions of the octanoyl moiety bound to the lipoyl domains of lipoate-dependent enzymes, thereby converting the octanoylated domains into lipoylated derivatives. The polypeptide is Lipoyl synthase, mitochondrial (Arthroderma otae (strain ATCC MYA-4605 / CBS 113480) (Microsporum canis)).